Here is a 413-residue protein sequence, read N- to C-terminus: Peptide chain release factor 1, mitochondrial (413 aa).

The transit peptide at 1–40 (MRVLIRPNFLSNLIRYCSRGTHSHDRSLRSVLSSNMIRLY) directs the protein to the mitochondrion. Glutamine 287 is subject to N5-methylglutamine.

This sequence belongs to the prokaryotic/mitochondrial release factor family. In terms of processing, methylation increases the termination efficiency of RF1. As to expression, mostly expressed in seedlings, stems and adult plants, and, to a lower extent, in siliques. Barely detected in etiolated seedlings and roots.

The protein resides in the mitochondrion. Peptide chain release factor 1 directs the termination of translation in response to the peptide chain termination codons UAG and UAA in mitochondria. This Arabidopsis thaliana (Mouse-ear cress) protein is Peptide chain release factor 1, mitochondrial.